The following is a 205-amino-acid chain: Holliday junction branch migration complex subunit RuvA (205 aa).

The interval 1–64 is domain I; the sequence is MIGKLKGLID…EDQIKLFGFR (64 aa). The tract at residues 65-143 is domain II; that stretch reads SDVEREWFRL…AFADVDPGVI (79 aa). The flexible linker stretch occupies residues 144–154; that stretch reads RLSGAIEDSRA. The interval 154–205 is domain III; the sequence is APQPIADAISALINLGYGQPQAAAAIAAASRAAGDKAETAQLIRLGLKELAK.

The protein belongs to the RuvA family. In terms of assembly, homotetramer. Forms an RuvA(8)-RuvB(12)-Holliday junction (HJ) complex. HJ DNA is sandwiched between 2 RuvA tetramers; dsDNA enters through RuvA and exits via RuvB. An RuvB hexamer assembles on each DNA strand where it exits the tetramer. Each RuvB hexamer is contacted by two RuvA subunits (via domain III) on 2 adjacent RuvB subunits; this complex drives branch migration. In the full resolvosome a probable DNA-RuvA(4)-RuvB(12)-RuvC(2) complex forms which resolves the HJ.

It localises to the cytoplasm. In terms of biological role, the RuvA-RuvB-RuvC complex processes Holliday junction (HJ) DNA during genetic recombination and DNA repair, while the RuvA-RuvB complex plays an important role in the rescue of blocked DNA replication forks via replication fork reversal (RFR). RuvA specifically binds to HJ cruciform DNA, conferring on it an open structure. The RuvB hexamer acts as an ATP-dependent pump, pulling dsDNA into and through the RuvAB complex. HJ branch migration allows RuvC to scan DNA until it finds its consensus sequence, where it cleaves and resolves the cruciform DNA. In Bradyrhizobium sp. (strain BTAi1 / ATCC BAA-1182), this protein is Holliday junction branch migration complex subunit RuvA.